Reading from the N-terminus, the 234-residue chain is Riboflavin kinase (234 aa).

The interval 1 to 98 (MAESTTAVGH…QEIFGDNSSV (98 aa)) is H-T-H motif-like. The segment at 99-234 (VELTGTVTSG…RITVQLKPKE (136 aa)) is riboflavin kinase. Position 108–113 (108–113 (GMGEGR)) interacts with CDP. 2 residues coordinate Mg(2+): T137 and N139. The FMN site is built by T199 and E207. 212-215 (ERLR) contacts CDP.

The protein belongs to the archaeal riboflavin kinase family. Mg(2+) serves as cofactor.

It carries out the reaction riboflavin + CTP = CDP + FMN + H(+). It functions in the pathway cofactor biosynthesis; FMN biosynthesis; FMN from riboflavin (CTP route): step 1/1. In terms of biological role, catalyzes the CTP-dependent phosphorylation of riboflavin (vitamin B2) to form flavin mononucleotide (FMN). This is Riboflavin kinase (ribK) from Haloquadratum walsbyi (strain DSM 16790 / HBSQ001).